We begin with the raw amino-acid sequence, 629 residues long: tRNA uridine 5-carboxymethylaminomethyl modification enzyme MnmG (629 aa).

13–18 (GGGHAG) provides a ligand contact to FAD. Position 273–287 (273–287 (GPRYCPSIEDKITRF)) interacts with NAD(+).

The protein belongs to the MnmG family. Homodimer. Heterotetramer of two MnmE and two MnmG subunits. FAD serves as cofactor.

The protein localises to the cytoplasm. NAD-binding protein involved in the addition of a carboxymethylaminomethyl (cmnm) group at the wobble position (U34) of certain tRNAs, forming tRNA-cmnm(5)s(2)U34. The chain is tRNA uridine 5-carboxymethylaminomethyl modification enzyme MnmG from Aeromonas hydrophila subsp. hydrophila (strain ATCC 7966 / DSM 30187 / BCRC 13018 / CCUG 14551 / JCM 1027 / KCTC 2358 / NCIMB 9240 / NCTC 8049).